Reading from the N-terminus, the 105-residue chain is N(4)-acetylcytidine amidohydrolase (105 aa).

The 87-residue stretch at 7-93 (TFFERFEHDI…VIAEIYPGLE (87 aa)) folds into the ASCH domain. Catalysis depends on lysine 21, which acts as the Proton acceptor. The active-site Nucleophile is the threonine 24. Glutamate 74 functions as the Proton donor in the catalytic mechanism.

It belongs to the N(4)-acetylcytidine amidohydrolase family.

It carries out the reaction N(4)-acetylcytidine + H2O = cytidine + acetate + H(+). The enzyme catalyses N(4)-acetyl-2'-deoxycytidine + H2O = 2'-deoxycytidine + acetate + H(+). The catalysed reaction is N(4)-acetylcytosine + H2O = cytosine + acetate + H(+). Catalyzes the hydrolysis of N(4)-acetylcytidine (ac4C). The chain is N(4)-acetylcytidine amidohydrolase from Shewanella baltica (strain OS155 / ATCC BAA-1091).